Here is a 1136-residue protein sequence, read N- to C-terminus: Solute carrier family 12 member 2 (1136 aa).

2 disordered regions span residues 1 to 73 (MSAS…SVSG) and 91 to 121 (PDAA…QQHH). Residues 1–208 (MSASPPISAG…SESKGVVKFG (208 aa)) are Cytoplasmic-facing. Phosphothreonine occurs at positions 125, 129, 134, 139, and 152. The chain crosses the membrane as a discontinuously helical span at residues 209 to 234 (WIKGVLVRCMLNIWGVMLFIRMTWIV). Leu219 serves as a coordination point for Na(+). Positions 220 and 221 each coordinate K(+). Na(+) is bound at residue Trp222. Chloride-binding residues include Gly223, Val224, and Met225. The Extracellular portion of the chain corresponds to 235 to 238 (GQAG). The helical transmembrane segment at 239–261 (IAYSCIIVIMATVVTTITGCSTS) threads the bilayer. Over 262 to 285 (AIATNGFVRGGGAYYLISRSLGPE) the chain is Cytoplasmic. The chain crosses the membrane as a helical span at residues 286–314 (FGGSIGLIFAFANAVAVAMYVVGFAETVV). Residue Phe294 coordinates chloride. Tyr305 contacts K(+). Over 315–327 (ELLMDSGLLMIDQ) the chain is Extracellular. 2 helical membrane passes run 328–351 (TNDI…AGME) and 352–376 (WEAK…IGSF). Residues 377-407 (IAVDSKKKFGFFSYDAGILAENFGPDFRGQT) are Extracellular-facing. Residues 408 to 427 (FFSVFSIFFPAATGILAGAN) form a discontinuously helical membrane-spanning segment. K(+)-binding residues include Pro417, Ala418, and Thr420. Residues Pro417 and Ala418 each contribute to the chloride site. Positions 421 and 422 each coordinate chloride. Residues 428-438 (ISGDLADPQMA) are Cytoplasmic-facing. A helical membrane pass occupies residues 439 to 462 (IPKGTLLAILITGLVYVGVAISAG). Over 463-523 (ACIVRDATGI…DFQVMSVVSG (61 aa)) the chain is Extracellular. Residues Asn475 and Asn481 are each glycosylated (N-linked (GlcNAc...) asparagine). A disulfide bridge links Cys496 with Cys507. The chain crosses the membrane as a helical span at residues 524-551 (FSPLISAGIFSATLSSALASLVSAPKVF). Residues Ala535, Ser538, and Ser539 each coordinate Na(+). The Cytoplasmic portion of the chain corresponds to 552-576 (QALCKDNIYPGIAIFGKGYGKNNEP). Transmembrane regions (helical) follow at residues 577 to 595 (LRGY…LIAE) and 596 to 619 (LNVI…FSVF). 2 residues coordinate chloride: Phe607 and Tyr611. Over 620-636 (HASLANSPGWRPSFKYY) the chain is Cytoplasmic. Helical transmembrane passes span 637–656 (NMWA…FIIN) and 657–672 (WWAA…SLYI). Over 673–1136 (YVSYKKPDVN…NHQSVLTFYS (464 aa)) the chain is Cytoplasmic. The tract at residues 689–702 (ALTYHQALTHSLQL) is scissor helix. A disordered region spans residues 875-921 (SKDSDGDSSKPSSKATSVQNSPAVQKDEDDDGKAHTQPLLKKDKKSP). Phosphothreonine is present on Thr1059.

Belongs to the SLC12A transporter family. As to quaternary structure, homodimer; adopts a domain-swap conformation at the scissor helices connecting the transmembrane domain and C-terminal domain. Phosphorylated at Thr-125, Thr-129 and Thr-134 by OXSR1/OSR1 and STK39/SPAK downstream of WNK kinases (WNK1, WNK2, WNK3 or WNK4), promoting its activity.

It localises to the basolateral cell membrane. It carries out the reaction K(+)(out) + 2 chloride(out) + Na(+)(out) = K(+)(in) + 2 chloride(in) + Na(+)(in). Activated following phosphorylation by OXSR1/OSR1 and STK39/SPAK. Inhibited by bumetanide. Functionally, cation-chloride cotransporter which mediates the electroneutral transport of chloride, potassium and/or sodium ions across the membrane. Plays a vital role in the regulation of ionic balance and cell volume. Important for maintenance of endolymph volume in the otic vesicle, probably by regulating ion homeostasis. Also plays a role in normal development of the swim bladder. In Danio rerio (Zebrafish), this protein is Solute carrier family 12 member 2.